A 365-amino-acid chain; its full sequence is Class I histocompatibility antigen, Gogo-C*0101/C*0102 alpha chain (365 aa).

Positions 1 to 24 (MRVMAPRTLILLLSGALALTETWA) are cleaved as a signal peptide. Residues 25–114 (GSHSMRYFFT…LRGYYNQSED (90 aa)) are alpha-1. Residues 25-308 (GSHSMRYFFT…EPSSQPTIPI (284 aa)) are Extracellular-facing. An N-linked (GlcNAc...) asparagine glycan is attached at N110. The alpha-2 stretch occupies residues 115–206 (GSHTFQRMYG…ENGKETLQRA (92 aa)). 2 disulfides stabilise this stretch: C125-C188 and C227-C283. Positions 207–298 (DPPKTHVTHH…GLLEPLTLRW (92 aa)) are alpha-3. The region spanning 209 to 297 (PKTHVTHHPI…KGLLEPLTLR (89 aa)) is the Ig-like C1-type domain. The tract at residues 299–308 (EPSSQPTIPI) is connecting peptide. A helical membrane pass occupies residues 309–332 (VGIVAGLAVLAVVFTGTVVAAVMC). Over 333-365 (RRKSSGGKGGSCSQAACSNSAQGSDESLIACKA) the chain is Cytoplasmic. 2 positions are modified to phosphoserine: S356 and S359.

It belongs to the MHC class I family. Heterodimer of an alpha chain and a beta chain (beta-2-microglobulin).

It localises to the membrane. Involved in the presentation of foreign antigens to the immune system. The protein is Class I histocompatibility antigen, Gogo-C*0101/C*0102 alpha chain of Gorilla gorilla gorilla (Western lowland gorilla).